A 249-amino-acid chain; its full sequence is Receptor-transporting protein 4 (249 aa).

Residues 1–227 (MLFPDDFSTW…QGCREPPQRE (227 aa)) are Cytoplasmic-facing. The 3CxxC-type zinc finger occupies 50 to 162 (TVLGRFQCSR…DTRNCEACSL (113 aa)). The tract at residues 173 to 208 (KVKPPRSPSPLPKSSSPSKSCPPPPQTRNTDFGNKT) is disordered. The span at 199–208 (TRNTDFGNKT) shows a compositional bias: polar residues. A helical transmembrane segment spans residues 228–248 (IEPPLFLFLSIAAFALFSLFT).

The protein belongs to the TMEM7 family. As to quaternary structure, interacts with TASR16. Interacts with OPRD1 and OPRM1; the interaction promotes cell surface localization of the OPDR1-OPRM1 heterodimer. In terms of tissue distribution, expressed at low levels in olfactory neurons. Upon viral infection, highly expressed in brain and different cells of nervous tissue.

It localises to the membrane. It is found in the cytoplasm. Chaperone protein that facilitates the trafficking and functional cell surface expression of some G-protein coupled receptors (GPCRs). Promotes functional expression of the bitter taste receptor TAS2R16. Also promotes functional expression of the opioid receptor heterodimer OPRD1-OPRM1. In addition, acts as a potent IFN-inducible suppressor of pathogens including lyssavirus rabies, influenza A or yellow fever virus. Mechanistically, associates with the viral replicase, binds viral RNA, and thereby suppresses viral genome amplification that replicates at the endoplasmic reticulum. In addition, restores antiviral signaling by interacting with and sequestering influenza virus protein NS1. This chain is Receptor-transporting protein 4 (Rtp4), found in Mus musculus (Mouse).